Here is a 273-residue protein sequence, read N- to C-terminus: MGYEEAFFRWAFLIATVYVAYYFLVSSDKKLATKPQKSKLTKLGKQKQRQKQKNTKKDTLVNRETPSKKSQKLETSDALKSKSKDSSKKEPVVVPKKGTPKIFQENHKVKKVKSPKKEKLVGKNPAEKEDTTDVEDTQKLEQKHSTTPSSLKMKSSISLAAITADDSLHNSFSSNDIDDGFQTVTSSRSYGKKKSTEPLTKRQRQNQQKKLRAKEMQELADEEQRRRLAAHRKELHEANRPRGGLNNSSRSAYSYINNGQAGSSKGNRYDSLW.

A helical membrane pass occupies residues 7–25 (FFRWAFLIATVYVAYYFLV). Disordered regions lie at residues 34 to 154 (KPQK…LKMK) and 168 to 273 (LHNS…DSLW). The segment covering 36–54 (QKSKLTKLGKQKQRQKQKN) has biased composition (basic residues). A compositionally biased stretch (basic and acidic residues) spans 55–91 (TKKDTLVNRETPSKKSQKLETSDALKSKSKDSSKKEP). Over residues 92–101 (VVVPKKGTPK) the composition is skewed to low complexity. The segment covering 115 to 144 (PKKEKLVGKNPAEKEDTTDVEDTQKLEQKH) has biased composition (basic and acidic residues). Residues 145-154 (STTPSSLKMK) are compositionally biased toward polar residues. The span at 201–212 (KRQRQNQQKKLR) shows a compositional bias: basic residues. The segment covering 213 to 240 (AKEMQELADEEQRRRLAAHRKELHEANR) has biased composition (basic and acidic residues). Residues 245 to 266 (LNNSSRSAYSYINNGQAGSSKG) are compositionally biased toward polar residues.

The protein resides in the cytoplasm. It localises to the membrane. This is an uncharacterized protein from Schizosaccharomyces pombe (strain 972 / ATCC 24843) (Fission yeast).